The sequence spans 479 residues: GTPase Obg (479 aa).

The Obg domain occupies 2 to 159 (PRFVDRVVIH…RDLTLELKTV (158 aa)). Positions 160–340 (ADVGLVGFPS…LIFGLWQMVS (181 aa)) constitute an OBG-type G domain. GTP is bound by residues 166–173 (GFPSAGKS), 191–195 (FTTLV), 212–215 (DVPG), 292–295 (NKID), and 321–323 (STV). Mg(2+) contacts are provided by serine 173 and threonine 193. Residues 358–436 (PVPVDDSGFD…IGEMTFDWEP (79 aa)) enclose the OCT domain. Positions 438-479 (TPAGGHVAMSGRGTDVRLERSDRVGAAERKAARRQRRERDDD) are disordered. Basic and acidic residues predominate over residues 451-467 (TDVRLERSDRVGAAERK).

The protein belongs to the TRAFAC class OBG-HflX-like GTPase superfamily. OBG GTPase family. In terms of assembly, monomer. Mg(2+) serves as cofactor.

It localises to the cytoplasm. Functionally, an essential GTPase which binds GTP, GDP and possibly (p)ppGpp with moderate affinity, with high nucleotide exchange rates and a fairly low GTP hydrolysis rate. Plays a role in control of the cell cycle, stress response, ribosome biogenesis and in those bacteria that undergo differentiation, in morphogenesis control. The polypeptide is GTPase Obg (Mycobacterium marinum (strain ATCC BAA-535 / M)).